Consider the following 539-residue polypeptide: Chaperonin GroEL (539 aa).

Residues 29 to 32 (TLGP), 86 to 90 (DGTTT), Gly-413, 479 to 481 (DAL), and Asp-495 each bind ATP.

Belongs to the chaperonin (HSP60) family. Forms a cylinder of 14 subunits composed of two heptameric rings stacked back-to-back. Interacts with the co-chaperonin GroES.

Its subcellular location is the cytoplasm. It catalyses the reaction ATP + H2O + a folded polypeptide = ADP + phosphate + an unfolded polypeptide.. Its function is as follows. Together with its co-chaperonin GroES, plays an essential role in assisting protein folding. The GroEL-GroES system forms a nano-cage that allows encapsulation of the non-native substrate proteins and provides a physical environment optimized to promote and accelerate protein folding. The protein is Chaperonin GroEL of Pseudothermotoga lettingae (strain ATCC BAA-301 / DSM 14385 / NBRC 107922 / TMO) (Thermotoga lettingae).